The primary structure comprises 135 residues: Probable histone H2A.7 (135 aa).

The protein belongs to the histone H2A family. In terms of assembly, the nucleosome is a histone octamer containing two molecules each of H2A, H2B, H3 and H4 assembled in one H3-H4 heterotetramer and two H2A-H2B heterodimers. The octamer wraps approximately 147 bp of DNA.

Its subcellular location is the nucleus. It localises to the chromosome. Core component of nucleosome. Nucleosomes wrap and compact DNA into chromatin, limiting DNA accessibility to the cellular machineries which require DNA as a template. Histones thereby play a central role in transcription regulation, DNA repair, DNA replication and chromosomal stability. DNA accessibility is regulated via a complex set of post-translational modifications of histones, also called histone code, and nucleosome remodeling. The protein is Probable histone H2A.7 of Oryza sativa subsp. indica (Rice).